Here is a 226-residue protein sequence, read N- to C-terminus: Protein pdh1 (226 aa).

A signal peptide spans 1-26 (MNHFSKFSVTKRLLILEVLFSAISFG). Residues 27–41 (ISIYIKVFGRSSIVT) lie on the Extracellular side of the membrane. A helical membrane pass occupies residues 42 to 62 (FFLLCFHLVPNALFLFPWTII). The Cytoplasmic segment spans residues 63-65 (TTS). A helical membrane pass occupies residues 66 to 86 (FVDANVFTLLSSILILSVYGV). Residues 87-97 (EIERSWGHKEY) lie on the Extracellular side of the membrane. A helical membrane pass occupies residues 98 to 118 (LLFCQFLTVIPNIAVLIPCFI). Over 119–191 (AYKITDSHYL…VFQSFPWTYF (73 aa)) the chain is Cytoplasmic. The chain crosses the membrane as a helical span at residues 192–212 (CLAVSGTCISELYVLFVHPVV). Residues 213 to 226 (QELFHLESHTQLPI) are Extracellular-facing.

Its subcellular location is the membrane. The protein is Protein pdh1 (pdh1) of Schizosaccharomyces pombe (strain 972 / ATCC 24843) (Fission yeast).